We begin with the raw amino-acid sequence, 460 residues long: tRNA-2-methylthio-N(6)-dimethylallyladenosine synthase (460 aa).

Residues 10 to 126 (GSYWITTFGC…LEVLLNRVDS (117 aa)) form the MTTase N-terminal domain. Positions 19, 55, 89, 161, 165, and 168 each coordinate [4Fe-4S] cluster. One can recognise a Radical SAM core domain in the interval 147 to 384 (RDSSICGWVN…NALVERCARE (238 aa)). The TRAM domain maps to 387 to 455 (ARYAGRTEEV…SFSLSGTPLP (69 aa)).

It belongs to the methylthiotransferase family. MiaB subfamily. As to quaternary structure, monomer. [4Fe-4S] cluster serves as cofactor.

It localises to the cytoplasm. It catalyses the reaction N(6)-dimethylallyladenosine(37) in tRNA + (sulfur carrier)-SH + AH2 + 2 S-adenosyl-L-methionine = 2-methylsulfanyl-N(6)-dimethylallyladenosine(37) in tRNA + (sulfur carrier)-H + 5'-deoxyadenosine + L-methionine + A + S-adenosyl-L-homocysteine + 2 H(+). In terms of biological role, catalyzes the methylthiolation of N6-(dimethylallyl)adenosine (i(6)A), leading to the formation of 2-methylthio-N6-(dimethylallyl)adenosine (ms(2)i(6)A) at position 37 in tRNAs that read codons beginning with uridine. This Parasynechococcus marenigrum (strain WH8102) protein is tRNA-2-methylthio-N(6)-dimethylallyladenosine synthase.